A 512-amino-acid chain; its full sequence is Ribonuclease Y (512 aa).

The helical transmembrane segment at 3-23 (FQIILVVIISALVGLVIGFFI) threads the bilayer. One can recognise a KH domain in the interval 202–265 (TVAVIPLPND…EVARLALERL (64 aa)). Residues 328 to 421 (VLKHSIEVCH…VQAADAISAA (94 aa)) enclose the HD domain.

This sequence belongs to the RNase Y family.

It localises to the cell membrane. Functionally, endoribonuclease that initiates mRNA decay. In Desulforamulus reducens (strain ATCC BAA-1160 / DSM 100696 / MI-1) (Desulfotomaculum reducens), this protein is Ribonuclease Y.